A 117-amino-acid polypeptide reads, in one-letter code: Large ribosomal subunit protein uL18 (117 aa).

Belongs to the universal ribosomal protein uL18 family. As to quaternary structure, part of the 50S ribosomal subunit; part of the 5S rRNA/L5/L18/L25 subcomplex. Contacts the 5S and 23S rRNAs.

In terms of biological role, this is one of the proteins that bind and probably mediate the attachment of the 5S RNA into the large ribosomal subunit, where it forms part of the central protuberance. This chain is Large ribosomal subunit protein uL18, found in Yersinia enterocolitica serotype O:8 / biotype 1B (strain NCTC 13174 / 8081).